We begin with the raw amino-acid sequence, 481 residues long: GDP-fucose protein O-fucosyltransferase 2 (481 aa).

The N-terminal stretch at 1–22 (MKGRAHIWVALLLACLPPRFRN) is a signal peptide. GDP-beta-L-fucose is bound by residues 59–63 (GEGFN), 287–289 (HLR), D365, and 382–383 (RF). Residue E60 is the Proton acceptor of the active site.

Belongs to the glycosyltransferase 68 family.

The protein localises to the endoplasmic reticulum. The catalysed reaction is L-seryl-[protein] + GDP-beta-L-fucose = 3-O-(alpha-L-fucosyl)-L-seryl-[protein] + GDP + H(+). It carries out the reaction L-threonyl-[protein] + GDP-beta-L-fucose = 3-O-(alpha-L-fucosyl)-L-threonyl-[protein] + GDP + H(+). The protein operates within protein modification; protein glycosylation. Catalyzes the reaction that attaches fucose through an O-glycosidic linkage to a conserved serine or threonine residue in the consensus sequence C1-X-X-S/T-C2 of thrombospondin type I repeats (TSRs) where C1 and C2 are the first and second cysteines of the repeat, respectively. O-fucosylates sporozoite proteins CSP and TRAP. O-fucosylation regulates stability and intracellular trafficking of TRAP but not of CSP. Probably by regulating protein O-fucosylation, may play a role in parasite transmission to the mosquito vector and/or infection of the vertebrate host hepatocytes; however, POFUT2 involvement in transmission/infection is controversial. This is GDP-fucose protein O-fucosyltransferase 2 from Plasmodium vivax (strain Salvador I).